Reading from the N-terminus, the 200-residue chain is MSPIIDALVPMVVEQTSRGERSYDIYSRLLKERVIFLTGQVEDHMANLVVAQLLFLESENPDKDIFLYINSPGGSVTAGMSIYDTMQFIKPNVSTVCMGQACSMGAFLLAGGAPGKRYVLPNSRVMIHQPLGGFQGQASDIQIHAQEILTIKTKLNKLLAEHTGQPLEVIERDTDRDNFMSADQAVEYGLVDAVLTHRSA.

S103 acts as the Nucleophile in catalysis. H128 is an active-site residue.

This sequence belongs to the peptidase S14 family. In terms of assembly, fourteen ClpP subunits assemble into 2 heptameric rings which stack back to back to give a disk-like structure with a central cavity, resembling the structure of eukaryotic proteasomes.

It is found in the cytoplasm. It carries out the reaction Hydrolysis of proteins to small peptides in the presence of ATP and magnesium. alpha-casein is the usual test substrate. In the absence of ATP, only oligopeptides shorter than five residues are hydrolyzed (such as succinyl-Leu-Tyr-|-NHMec, and Leu-Tyr-Leu-|-Tyr-Trp, in which cleavage of the -Tyr-|-Leu- and -Tyr-|-Trp bonds also occurs).. In terms of biological role, cleaves peptides in various proteins in a process that requires ATP hydrolysis. Has a chymotrypsin-like activity. Plays a major role in the degradation of misfolded proteins. In Vibrio vulnificus (strain CMCP6), this protein is ATP-dependent Clp protease proteolytic subunit.